Reading from the N-terminus, the 185-residue chain is Ribosome-recycling factor (185 aa).

This sequence belongs to the RRF family.

The protein localises to the cytoplasm. Its function is as follows. Responsible for the release of ribosomes from messenger RNA at the termination of protein biosynthesis. May increase the efficiency of translation by recycling ribosomes from one round of translation to another. This Legionella pneumophila (strain Paris) protein is Ribosome-recycling factor.